Reading from the N-terminus, the 200-residue chain is Imidazoleglycerol-phosphate dehydratase (200 aa).

Belongs to the imidazoleglycerol-phosphate dehydratase family.

The protein localises to the cytoplasm. The catalysed reaction is D-erythro-1-(imidazol-4-yl)glycerol 3-phosphate = 3-(imidazol-4-yl)-2-oxopropyl phosphate + H2O. Its pathway is amino-acid biosynthesis; L-histidine biosynthesis; L-histidine from 5-phospho-alpha-D-ribose 1-diphosphate: step 6/9. This Chlorobium phaeobacteroides (strain BS1) protein is Imidazoleglycerol-phosphate dehydratase.